We begin with the raw amino-acid sequence, 407 residues long: Argininosuccinate synthase (407 aa).

ATP-binding positions include 13 to 21 and alanine 40; that span reads AYSGGLDTS. L-citrulline-binding residues include tyrosine 91 and serine 96. Residue glycine 121 participates in ATP binding. L-aspartate-binding residues include threonine 123, asparagine 127, and aspartate 128. Asparagine 127 serves as a coordination point for L-citrulline. Positions 131, 182, 191, 267, and 279 each coordinate L-citrulline.

The protein belongs to the argininosuccinate synthase family. Type 1 subfamily. In terms of assembly, homotetramer.

It is found in the cytoplasm. The catalysed reaction is L-citrulline + L-aspartate + ATP = 2-(N(omega)-L-arginino)succinate + AMP + diphosphate + H(+). The protein operates within amino-acid biosynthesis; L-arginine biosynthesis; L-arginine from L-ornithine and carbamoyl phosphate: step 2/3. The sequence is that of Argininosuccinate synthase from Bartonella bacilliformis (strain ATCC 35685 / KC583 / Herrer 020/F12,63).